The chain runs to 148 residues: SsrA-binding protein (148 aa).

Positions 127–142 (KRESEKERDWERDKAR) are enriched in basic and acidic residues. A disordered region spans residues 127–148 (KRESEKERDWERDKARLMRVKT).

The protein belongs to the SmpB family.

It localises to the cytoplasm. Required for rescue of stalled ribosomes mediated by trans-translation. Binds to transfer-messenger RNA (tmRNA), required for stable association of tmRNA with ribosomes. tmRNA and SmpB together mimic tRNA shape, replacing the anticodon stem-loop with SmpB. tmRNA is encoded by the ssrA gene; the 2 termini fold to resemble tRNA(Ala) and it encodes a 'tag peptide', a short internal open reading frame. During trans-translation Ala-aminoacylated tmRNA acts like a tRNA, entering the A-site of stalled ribosomes, displacing the stalled mRNA. The ribosome then switches to translate the ORF on the tmRNA; the nascent peptide is terminated with the 'tag peptide' encoded by the tmRNA and targeted for degradation. The ribosome is freed to recommence translation, which seems to be the essential function of trans-translation. The protein is SsrA-binding protein of Aromatoleum aromaticum (strain DSM 19018 / LMG 30748 / EbN1) (Azoarcus sp. (strain EbN1)).